A 109-amino-acid polypeptide reads, in one-letter code: Protein phosphatase 1 regulatory subunit 1C (109 aa).

Positions 25-109 are disordered; it reads AEQIRKRRPT…TNEREEQRDH (85 aa). Basic and acidic residues predominate over residues 45-54; that stretch reads NPPEIDDKRG. Positions 55–75 are enriched in polar residues; sequence PNTQGELQNASPKQRKQSVYT. The span at 100–109 shows a compositional bias: basic and acidic residues; it reads TNEREEQRDH.

This sequence belongs to the protein phosphatase inhibitor 1 family.

The protein resides in the cytoplasm. In terms of biological role, may increase cell susceptibility to TNF-induced apoptosis. The polypeptide is Protein phosphatase 1 regulatory subunit 1C (PPP1R1C) (Homo sapiens (Human)).